Here is a 126-residue protein sequence, read N- to C-terminus: Protein ApaG (126 aa).

Residues 2–126 (RRKPYELKVE…FSLAIPRRLH (125 aa)) enclose the ApaG domain.

This Methylococcus capsulatus (strain ATCC 33009 / NCIMB 11132 / Bath) protein is Protein ApaG.